The following is a 193-amino-acid chain: Holliday junction branch migration complex subunit RuvA (193 aa).

The segment at 1–64 (MIGRIAGTLI…EDAHLLYGFG (64 aa)) is domain I. Positions 65–143 (TAAERETFRQ…ADLGTVPGGP (79 aa)) are domain II. Residues 144 to 151 (AVSDDAVD) form a flexible linker region. The domain III stretch occupies residues 151–193 (DVLNALLALGYSDKEAAQAIKQVPAGTGVSEGIKLALKALSKG).

Belongs to the RuvA family. As to quaternary structure, homotetramer. Forms an RuvA(8)-RuvB(12)-Holliday junction (HJ) complex. HJ DNA is sandwiched between 2 RuvA tetramers; dsDNA enters through RuvA and exits via RuvB. An RuvB hexamer assembles on each DNA strand where it exits the tetramer. Each RuvB hexamer is contacted by two RuvA subunits (via domain III) on 2 adjacent RuvB subunits; this complex drives branch migration. In the full resolvosome a probable DNA-RuvA(4)-RuvB(12)-RuvC(2) complex forms which resolves the HJ.

Its subcellular location is the cytoplasm. Functionally, the RuvA-RuvB-RuvC complex processes Holliday junction (HJ) DNA during genetic recombination and DNA repair, while the RuvA-RuvB complex plays an important role in the rescue of blocked DNA replication forks via replication fork reversal (RFR). RuvA specifically binds to HJ cruciform DNA, conferring on it an open structure. The RuvB hexamer acts as an ATP-dependent pump, pulling dsDNA into and through the RuvAB complex. HJ branch migration allows RuvC to scan DNA until it finds its consensus sequence, where it cleaves and resolves the cruciform DNA. The chain is Holliday junction branch migration complex subunit RuvA from Ralstonia nicotianae (strain ATCC BAA-1114 / GMI1000) (Ralstonia solanacearum).